The primary structure comprises 194 residues: Exopolysaccharide II synthesis transcriptional activator ExpG (194 aa).

The region spanning 49–184 is the HTH marR-type domain; that stretch reads YFELARVMER…AFQTLHRLEL (136 aa).

In terms of biological role, transcriptional activator of genes for galactoglucan synthesis (exopolysaccharide II or EPS II). The chain is Exopolysaccharide II synthesis transcriptional activator ExpG (expG) from Rhizobium meliloti (strain 1021) (Ensifer meliloti).